A 210-amino-acid chain; its full sequence is 3-hexulose-6-phosphate synthase (210 aa).

It belongs to the HPS/KGPDC family. HPS subfamily.

It catalyses the reaction D-ribulose 5-phosphate + formaldehyde = D-arabino-hex-3-ulose 6-phosphate. The protein operates within one-carbon metabolism; formaldehyde assimilation via RuMP pathway; D-fructose 6-phosphate from D-ribulose 5-phosphate and formaldehyde: step 1/2. Its function is as follows. Catalyzes the condensation of ribulose 5-phosphate with formaldehyde to form 3-hexulose 6-phosphate. Together with HxlB, may act as a formaldehyde detoxification system. This chain is 3-hexulose-6-phosphate synthase (hxlA), found in Bacillus subtilis (strain 168).